The following is an 85-amino-acid chain: U4-theraphotoxin-Hhn1a (85 aa).

The N-terminal stretch at 1–22 is a signal peptide; that stretch reads MKVTLIAILTCAAVLVLHTTAA. Positions 23 to 48 are excised as a propeptide; it reads EELEAESQLMKVGMPDTELAAVDEER. 3 disulfide bridges follow: cysteine 52-cysteine 66, cysteine 56-cysteine 77, and cysteine 71-cysteine 82.

This sequence belongs to the neurotoxin 12 (Hwtx-2) family. 02 (Hwtx-2) subfamily. As to quaternary structure, monomer. In terms of tissue distribution, expressed by the venom gland.

It localises to the secreted. Functionally, neurotoxin active on both insects and mammals. The polypeptide is U4-theraphotoxin-Hhn1a (Cyriopagopus hainanus (Chinese bird spider)).